Consider the following 103-residue polypeptide: Histone H4 (103 aa).

A compositionally biased stretch (gly residues) spans 1–14; it reads MTGRGKGGKGLGKG. The segment at 1–20 is disordered; that stretch reads MTGRGKGGKGLGKGGAKRHR. N6-acetyl-N6-methyllysine; alternate occurs at positions 6 and 13. A DNA-binding region spans residues 17 to 21; the sequence is KRHRK.

This sequence belongs to the histone H4 family. The nucleosome is a histone octamer containing two molecules each of H2A, H2B, H3 and H4 assembled in one H3-H4 heterotetramer and two H2A-H2B heterodimers. The octamer wraps approximately 147 bp of DNA.

It is found in the nucleus. The protein localises to the chromosome. Functionally, core component of nucleosome. Nucleosomes wrap and compact DNA into chromatin, limiting DNA accessibility to the cellular machineries which require DNA as a template. Histones thereby play a central role in transcription regulation, DNA repair, DNA replication and chromosomal stability. DNA accessibility is regulated via a complex set of post-translational modifications of histones, also called histone code, and nucleosome remodeling. The protein is Histone H4 of Diadromus pulchellus (Parasitic wasp).